We begin with the raw amino-acid sequence, 350 residues long: MGAGASAEEKHSRELEKKLKEDAEKDARTVKLLLLGAGESGKSTIVKQMKIIHQDGYSLEECLEFIAIIYGNTLQSILAIVRAMTTLNIQYGDSARQDDARKLMHMADTIEEGTMPKEMSDIIQRLWKDSGIQACFERASEYQLNDSAGYYLSDLERLVTPGYVPTEQDVLRSRVKTTGIIETQFSFKDLNFRMFDVGGQRSERKKWIHCFEGVTCIIFIAALSAYDMVLVEDDEVNRMHESLHLFNSICNHRYFATTSIVLFLNKKDVFFEKIKKAHLSICFPDYDGPNTYEDAGNYIKVQFLELNMRRDVKEIYSHMTCATDTQNVKFVFDAVTDIIIKENLKDCGLF.

The disordered stretch occupies residues 1 to 21 (MGAGASAEEKHSRELEKKLKE). Gly-2 carries N-myristoyl glycine lipidation. The segment covering 7–21 (AEEKHSRELEKKLKE) has biased composition (basic and acidic residues). The 323-residue stretch at 28–350 (RTVKLLLLGA…KENLKDCGLF (323 aa)) folds into the G-alpha domain. The interval 31 to 44 (KLLLLGAGESGKST) is G1 motif. 36 to 43 (GAGESGKS) is a binding site for GTP. Ser-43 lines the Mg(2+) pocket. The residue at position 142 (Tyr-142) is a Phosphotyrosine; by SRC. GTP contacts are provided by residues Asp-146, 171–177 (LRSRVKT), Gly-199, 265–268 (NKKD), and Ala-322. The interval 169–177 (DVLRSRVKT) is G2 motif. Arg-174 carries the post-translational modification ADP-ribosylarginine; by cholera toxin. Thr-177 contacts Mg(2+). Residues 192 to 201 (FRMFDVGGQR) are G3 motif. The interval 261-268 (VLFLNKKD) is G4 motif. The interval 320–325 (TCATDT) is G5 motif. The interval 340–350 (IKENLKDCGLF) is interaction with RHO. Position 347 is an ADP-ribosylcysteine; by pertussis toxin (Cys-347).

The protein belongs to the G-alpha family. G(i/o/t/z) subfamily. Heterotrimeric G proteins are composed of 3 subunits alpha, beta and gamma. The alpha chain contains the guanine nucleotide binding site. Interacts with RHO. Interacts with RGS9 and PDE6G. Interacts (when myristoylated) with UNC119; interaction is required for localization in sensory neurons. As to expression, rod photoreceptor cells. Predominantly expressed in the retina followed by the ciliary body, iris and retinal pigment epithelium.

It is found in the cell projection. The protein resides in the cilium. It localises to the photoreceptor outer segment. Its subcellular location is the membrane. The protein localises to the photoreceptor inner segment. In terms of biological role, functions as a signal transducer for the rod photoreceptor RHO. Required for normal RHO-mediated light perception by the retina. Guanine nucleotide-binding proteins (G proteins) function as transducers downstream of G protein-coupled receptors (GPCRs), such as the photoreceptor RHO. The alpha chain contains the guanine nucleotide binding site and alternates between an active, GTP-bound state and an inactive, GDP-bound state. Activated RHO promotes GDP release and GTP binding. Signaling is mediated via downstream effector proteins, such as cGMP-phosphodiesterase. The chain is Guanine nucleotide-binding protein G(t) subunit alpha-1 (GNAT1) from Homo sapiens (Human).